We begin with the raw amino-acid sequence, 481 residues long: Guanine nucleotide exchange factor C9orf72 homolog (481 aa).

Positions Ser23 to Ser194 constitute a uDENN C9ORF72-type domain. The region spanning Asp200 to Thr343 is the cDENN C9ORF72-type domain. The dDENN C9ORF72-type domain maps to Val370–Phe464. The tract at residues Ser461–Phe481 is required for the homodimerization of the C9orf72-SMCR8 complex.

In terms of assembly, component of the C9orf72-SMCR8 complex, at least composed of C9orf72, SMCR8 and WDR41. The complex is formed of two protomers, each individually consisting of one molecule each of C9orf72, SMCR8 and WDR41. The protomers homodimerize via an interaction between C9orf72 (via C-terminus) and SMCR8 (via N-terminus). Within each protomer SMCR8 (via DENN domain) acts as a bridging protein between WDR41 (via C-terminus and N-terminus) and C9orf72 (via C-terminus). The C9orf72-SMCR8 complex associates with the ULK1/ATG1 kinase complex. Interacts with ULK1/ATG1 kinase complex members ULK1, ATG13 and RB1CC1. Interacts with SMCR8; the interaction is direct. Interacts with HNRNPA1, HNRNPA2B1 and UBQLN2. Interacts with small Rab GTPase RAB1A; the interaction mediates recruitment of RAB1A to the ULK1/ATG1 kinase complex. Also interacts with small Rab GTPase RAB7A. Interacts with cofilin. Interacts with GTP-binding proteins ARF1 and ARF6. Interacts with the DLG4/PSD-95. Interacts with CARM1 (via PH domain-like fold). Interacts with RAB39A and RAB39B (in GDP-bound forms); functions as GEF for RAB39A and RAB39B.

It localises to the nucleus. The protein localises to the cytoplasm. The protein resides in the P-body. It is found in the stress granule. Its subcellular location is the endosome. It localises to the lysosome. The protein localises to the cytoplasmic vesicle. The protein resides in the autophagosome. It is found in the autolysosome. Its subcellular location is the secreted. It localises to the cell projection. The protein localises to the axon. The protein resides in the growth cone. It is found in the perikaryon. Functionally, acts as a guanine-nucleotide releasing factor (GEF) for Rab GTPases by promoting the conversion of inactive RAB-GDP to the active form RAB-GTP. Acts as a GEF for RAB39A which enables HOPS-mediated autophagosome-lysosome membrane tethering and fusion in mammalian autophagy. Component of the C9orf72-SMCR8 complex where both subunits display GEF activity and that regulates autophagy. As part of the C9orf72-SMCR8-WDR41 (CSW) complex, functions as GEF for RAB8A and RAB39B, thereby promoting autophagosome maturation. As part of the C9orf72-SMCR8 complex, also functions as GTPase activating protein (GAP) for RAB8A and RAB11A in vitro. The C9orf72-SMCR8 complex also acts as a regulator of autophagy initiation by interacting with the ULK1/ATG1 kinase complex and modulating its protein kinase activity. Promotes initiation of autophagy by regulating the RAB1A-dependent trafficking of the ULK1/ATG1 kinase complex to the phagophore which leads to autophagosome formation. Acts as a regulator of mTORC1 signaling by promoting phosphorylation of mTORC1 substrates. Plays a role in endosomal trafficking. May be involved in regulating the maturation of phagosomes to lysosomes. Promotes the lysosomal localization and lysosome-mediated degradation of CARM1 which leads to inhibition of starvation-induced lipid metabolism. Regulates actin dynamics in motor neurons by inhibiting the GTP-binding activity of ARF6, leading to ARF6 inactivation. This reduces the activity of the LIMK1 and LIMK2 kinases which are responsible for phosphorylation and inactivation of cofilin, leading to CFL1/cofilin activation. Positively regulates axon extension and axon growth cone size in spinal motor neurons. Required for SMCR8 protein expression and localization at pre- and post-synaptic compartments in the forebrain, also regulates protein abundance of RAB3A and GRIA1/GLUR1 in post-synaptic compartments in the forebrain and hippocampus. Plays a role within the hematopoietic system in restricting inflammation and the development of autoimmunity. In Rattus norvegicus (Rat), this protein is Guanine nucleotide exchange factor C9orf72 homolog.